Here is a 182-residue protein sequence, read N- to C-terminus: Transcriptional repressor NrdR (182 aa).

The interval 1–24 (MRCPYCGGLDTQVRDSRPTEDNTA) is disordered. A zinc finger lies at 3-34 (CPYCGGLDTQVRDSRPTEDNTAIRRRRICPDC). Positions 12–24 (QVRDSRPTEDNTA) are enriched in basic and acidic residues. In terms of domain architecture, ATP-cone spans 49 to 139 (LMVLKRSGRR…VYRNFREAKD (91 aa)). The interval 146-182 (ELSQPELAQSDDVKAEGGAEGGRDKPKAAGKPPRSAE) is disordered. The span at 156–172 (DDVKAEGGAEGGRDKPK) shows a compositional bias: basic and acidic residues.

The protein belongs to the NrdR family. It depends on Zn(2+) as a cofactor.

In terms of biological role, negatively regulates transcription of bacterial ribonucleotide reductase nrd genes and operons by binding to NrdR-boxes. This is Transcriptional repressor NrdR from Xanthobacter autotrophicus (strain ATCC BAA-1158 / Py2).